We begin with the raw amino-acid sequence, 527 residues long: MHDKILILDFGSQVTQLIARRVREANVYSEIHPYDVDASFIRDFAPKGVILSGGPSSVTETDTPRVPQAVFELGVPVLGICYGMQAMAEQLGGKVDIGHLREFGYAEVRARNHTSLLEGISDFTTPEGHGMLKVWMSHGDKVLEMPPGFALMASTESCPIAAMADETRHFYGLQWHPEVTHTVQGRAMLERFVLKICGAQPDWEMGHYIDEAVAKIREQVGQEHVILGLSGGVDSSVAAALLHRAIGDQLTCVFVDHGLLRLNEAEQVMATFADHLGVKVIHVDASEVFLRKLAGVTDPEAKRKIIGAEFVEVFQTEAGKLTDAKWLAQGTIYPDVIESAGKGKKATQTIKSHHNVGGLPETLNLKLLEPLRELFKDEVRELGVKLGLPPAMVYRHPFPGPGLGVRILGEVKRDFADLLRRADAIFIETLRTFIDKETGKSWYDLTSQAFAVFLPVKSVGVMGDGRTYEYVVALRAVQTLDFMTAHWAHLPHELLGHVSNRIINEVRGINRVVYDISGKPPATIEWE.

A Glutamine amidotransferase type-1 domain is found at 4–202 (KILILDFGSQ…VLKICGAQPD (199 aa)). Catalysis depends on C81, which acts as the Nucleophile. Residues H176 and E178 contribute to the active site. Residues 203–395 (WEMGHYIDEA…LGLPPAMVYR (193 aa)) form the GMPS ATP-PPase domain. ATP is bound at residue 230 to 236 (SGGVDSS).

As to quaternary structure, homodimer.

The enzyme catalyses XMP + L-glutamine + ATP + H2O = GMP + L-glutamate + AMP + diphosphate + 2 H(+). The protein operates within purine metabolism; GMP biosynthesis; GMP from XMP (L-Gln route): step 1/1. Its function is as follows. Catalyzes the synthesis of GMP from XMP. The polypeptide is GMP synthase [glutamine-hydrolyzing] (Paraburkholderia xenovorans (strain LB400)).